The sequence spans 424 residues: Glutamyl-tRNA reductase (424 aa).

Substrate contacts are provided by residues 53–56, Ser111, 116–118, and Gln122; these read TCNR and EPQ. The Nucleophile role is filled by Cys54. 191 to 196 is an NADP(+) binding site; the sequence is GAGEMI.

It belongs to the glutamyl-tRNA reductase family. In terms of assembly, homodimer.

The catalysed reaction is (S)-4-amino-5-oxopentanoate + tRNA(Glu) + NADP(+) = L-glutamyl-tRNA(Glu) + NADPH + H(+). Its pathway is porphyrin-containing compound metabolism; protoporphyrin-IX biosynthesis; 5-aminolevulinate from L-glutamyl-tRNA(Glu): step 1/2. Its function is as follows. Catalyzes the NADPH-dependent reduction of glutamyl-tRNA(Glu) to glutamate 1-semialdehyde (GSA). This chain is Glutamyl-tRNA reductase, found in Bordetella bronchiseptica (strain ATCC BAA-588 / NCTC 13252 / RB50) (Alcaligenes bronchisepticus).